A 417-amino-acid polypeptide reads, in one-letter code: Serine hydroxymethyltransferase (417 aa).

Residues leucine 121 and 125–127 (GHL) contribute to the (6S)-5,6,7,8-tetrahydrofolate site. Lysine 229 is subject to N6-(pyridoxal phosphate)lysine. Residue 355-357 (SPF) coordinates (6S)-5,6,7,8-tetrahydrofolate.

Belongs to the SHMT family. Homodimer. Pyridoxal 5'-phosphate serves as cofactor.

The protein resides in the cytoplasm. It carries out the reaction (6R)-5,10-methylene-5,6,7,8-tetrahydrofolate + glycine + H2O = (6S)-5,6,7,8-tetrahydrofolate + L-serine. It participates in one-carbon metabolism; tetrahydrofolate interconversion. Its pathway is amino-acid biosynthesis; glycine biosynthesis; glycine from L-serine: step 1/1. In terms of biological role, catalyzes the reversible interconversion of serine and glycine with tetrahydrofolate (THF) serving as the one-carbon carrier. This reaction serves as the major source of one-carbon groups required for the biosynthesis of purines, thymidylate, methionine, and other important biomolecules. Also exhibits THF-independent aldolase activity toward beta-hydroxyamino acids, producing glycine and aldehydes, via a retro-aldol mechanism. The protein is Serine hydroxymethyltransferase of Shewanella baltica (strain OS195).